Here is a 929-residue protein sequence, read N- to C-terminus: Chitin synthase 1 (929 aa).

Gly residues predominate over residues 1-12; sequence MAYRGAGGPGGG. Disordered regions lie at residues 1–43 and 114–156; these read MAYR…QEDE and MGGH…GGGL. Composition is skewed to polar residues over residues 21-33 and 140-149; these read QDLN…SNVQ and SWVQRQNPNA. Asn560 is a glycosylation site (N-linked (GlcNAc...) asparagine). 5 consecutive transmembrane segments (helical) span residues 587–607, 643–663, 678–698, 730–750, and 758–778; these read FFFH…WFSL, LFNA…FILA, SFFV…YLVV, VILL…FMYL, and SFPY…VYAF. Asn801 carries an N-linked (GlcNAc...) asparagine glycan. Transmembrane regions (helical) follow at residues 857–877 and 897–917; these read TMLV…ITSD and FLLF…LWFL.

Belongs to the chitin synthase family. Class III subfamily.

The protein resides in the cell membrane. The enzyme catalyses [(1-&gt;4)-N-acetyl-beta-D-glucosaminyl](n) + UDP-N-acetyl-alpha-D-glucosamine = [(1-&gt;4)-N-acetyl-beta-D-glucosaminyl](n+1) + UDP + H(+). In terms of biological role, polymerizes chitin, a structural polymer of the cell wall and septum, by transferring the sugar moiety of UDP-GlcNAc to the non-reducing end of the growing chitin polymer. CHS1 and CHS3 have compensatory functions in cell wall modifications in responses to stresses. Involved in appressoria formation and required for full virulence. This Pyricularia oryzae (strain 70-15 / ATCC MYA-4617 / FGSC 8958) (Rice blast fungus) protein is Chitin synthase 1.